The sequence spans 62 residues: Large ribosomal subunit protein bL28 (62 aa).

This sequence belongs to the bacterial ribosomal protein bL28 family.

The chain is Large ribosomal subunit protein bL28 from Helicobacter hepaticus (strain ATCC 51449 / 3B1).